Reading from the N-terminus, the 246-residue chain is Exosome complex component Rrp41 (246 aa).

Belongs to the RNase PH family. Rrp41 subfamily. Component of the archaeal exosome complex. Forms a hexameric ring-like arrangement composed of 3 Rrp41-Rrp42 heterodimers. The hexameric ring associates with a trimer of Rrp4 and/or Csl4 subunits.

The protein resides in the cytoplasm. In terms of biological role, catalytic component of the exosome, which is a complex involved in RNA degradation. Has 3'-&gt;5' exoribonuclease activity. Can also synthesize heteromeric RNA-tails. The protein is Exosome complex component Rrp41 of Aeropyrum pernix (strain ATCC 700893 / DSM 11879 / JCM 9820 / NBRC 100138 / K1).